A 347-amino-acid polypeptide reads, in one-letter code: Heat-inducible transcription repressor HrcA (347 aa).

It belongs to the HrcA family.

In terms of biological role, negative regulator of class I heat shock genes (grpE-dnaK-dnaJ and groELS operons). Prevents heat-shock induction of these operons. In Mycoplasmopsis pulmonis (strain UAB CTIP) (Mycoplasma pulmonis), this protein is Heat-inducible transcription repressor HrcA.